We begin with the raw amino-acid sequence, 228 residues long: ATP-dependent dethiobiotin synthetase BioD (228 aa).

13 to 18 provides a ligand contact to ATP; the sequence is DVGKTV. Position 17 (T17) interacts with Mg(2+). K38 is an active-site residue. Residues D55, 116–119, 176–177, and 205–207 each bind ATP; these read EGAG, NR, and PYI. D55 and E116 together coordinate Mg(2+).

This sequence belongs to the dethiobiotin synthetase family. In terms of assembly, homodimer. It depends on Mg(2+) as a cofactor.

It is found in the cytoplasm. The enzyme catalyses (7R,8S)-7,8-diammoniononanoate + CO2 + ATP = (4R,5S)-dethiobiotin + ADP + phosphate + 3 H(+). Its pathway is cofactor biosynthesis; biotin biosynthesis; biotin from 7,8-diaminononanoate: step 1/2. Its function is as follows. Catalyzes a mechanistically unusual reaction, the ATP-dependent insertion of CO2 between the N7 and N8 nitrogen atoms of 7,8-diaminopelargonic acid (DAPA, also called 7,8-diammoniononanoate) to form a ureido ring. The sequence is that of ATP-dependent dethiobiotin synthetase BioD from Vibrio parahaemolyticus serotype O3:K6 (strain RIMD 2210633).